Reading from the N-terminus, the 561-residue chain is Centromere protein T (561 aa).

The disordered stretch occupies residues Met1–Glu83. Positions Arg18–Thr27 are enriched in basic and acidic residues. A compositionally biased stretch (low complexity) spans Ala34–Ala46. A Phosphoserine modification is found at Ser47. Position 85 is a phosphothreonine (Thr85). Residues Ile93–Pro421 are flexible stalk domain. Disordered regions lie at residues His256–Pro292 and Ala333–Lys457. Residues Lys276–Ser288 show a composition bias toward polar residues. Ser343, Ser345, and Ser356 each carry phosphoserine. Residues Arg357 to Val367 show a composition bias toward basic and acidic residues. Residues Ser373, Ser385, Ser386, and Ser397 each carry the phosphoserine modification. Low complexity predominate over residues Ala395–Ser407.

Belongs to the CENP-T/CNN1 family. As to quaternary structure, component of the CENPA-CAD complex, composed of CENPI, CENPK, CENPL, CENPO, CENPP, CENPQ, CENPR and CENPS. The CENPA-CAD complex is probably recruited on centromeres by the CENPA-NAC complex, at least composed of CENPA, CENPC, CENPH, CENPM, CENPN, CENPT and CENPU. Identified in a centromeric complex containing histones H2A, H2B, H3 and H4, and at least CENPA, CENPB, CENPC, CENPT, CENPN, HJURP, SUPT16H, SSRP1 and RSF1. Interacts (via N-terminus) with the NDC80 complex. Heterodimer with CENPW; this dimer coassembles with CENPS-CENPX heterodimers at centromeres to form the tetrameric CENP-T-W-S-X complex. In terms of processing, dynamically phosphorylated at Ser-47 and probably also other sites during the cell cycle. Phosphorylated at Ser-47 during G2 phase, metaphase and anaphase, but not during telophase or G1 phase.

Its subcellular location is the nucleus. It is found in the chromosome. The protein localises to the centromere. The protein resides in the kinetochore. Its function is as follows. Component of the CENPA-NAC (nucleosome-associated) complex, a complex that plays a central role in assembly of kinetochore proteins, mitotic progression and chromosome segregation. The CENPA-NAC complex recruits the CENPA-CAD (nucleosome distal) complex and may be involved in incorporation of newly synthesized CENPA into centromeres. Part of a nucleosome-associated complex that binds specifically to histone H3-containing nucleosomes at the centromere, as opposed to nucleosomes containing CENPA. Component of the heterotetrameric CENP-T-W-S-X complex that binds and supercoils DNA, and plays an important role in kinetochore assembly. CENPT has a fundamental role in kinetochore assembly and function. It is one of the inner kinetochore proteins, with most further proteins binding downstream. Required for normal chromosome organization and normal progress through mitosis. This is Centromere protein T (CENPT) from Homo sapiens (Human).